The chain runs to 317 residues: Cytochrome c biogenesis protein CcsA (317 aa).

7 helical membrane-spanning segments follow: residues 13–35 (ISFS…HEIV), 44–64 (GMIA…IYSG), 71–91 (LYES…VPYF), 143–163 (MLLS…LLVI), 171–191 (MIGF…IKYL), 225–245 (VIGL…VWAN), and 286–306 (AIVA…VNLL).

The protein belongs to the CcmF/CycK/Ccl1/NrfE/CcsA family. May interact with Ccs1.

The protein resides in the plastid. It is found in the chloroplast thylakoid membrane. Required during biogenesis of c-type cytochromes (cytochrome c6 and cytochrome f) at the step of heme attachment. The polypeptide is Cytochrome c biogenesis protein CcsA (Illicium oligandrum (Star anise)).